A 100-amino-acid polypeptide reads, in one-letter code: uncharacterized protein (100 aa).

Residues 42–84 form a disordered region; that stretch reads PGEPWRTAGGIGEGGAGGDGAAAGGEGDVHGRPAGAEDGEDGA. The segment covering 50 to 67 has biased composition (gly residues); that stretch reads GGIGEGGAGGDGAAAGGE.

This is an uncharacterized protein from Torque teno tamarin virus (isolate So-TTV2).